A 22-amino-acid chain; its full sequence is Motilin (22 aa).

The tract at residues 1–22 is disordered; that stretch reads FVPIFTHSELQKIREKERNKGQ. A compositionally biased stretch (basic and acidic residues) spans 9-22; the sequence is ELQKIREKERNKGQ.

Belongs to the motilin family.

Its subcellular location is the secreted. Plays an important role in the regulation of interdigestive gastrointestinal motility and indirectly causes rhythmic contraction of duodenal and colonic smooth muscle. This chain is Motilin (MLN), found in Canis lupus familiaris (Dog).